The primary structure comprises 692 residues: DNA ligase (692 aa).

NAD(+) is bound by residues 40–44 (DAAYD), 89–90 (SL), and Glu121. The active-site N6-AMP-lysine intermediate is the Lys123. NAD(+)-binding residues include Arg144, Glu181, Lys297, and Lys321. Zn(2+) is bound by residues Cys415, Cys417, Cys439, and Cys445. A BRCT domain is found at 614–692 (KTDTAVAGKT…EDEWLEMVGS (79 aa)).

This sequence belongs to the NAD-dependent DNA ligase family. LigA subfamily. The cofactor is Mg(2+). Requires Mn(2+) as cofactor.

The catalysed reaction is NAD(+) + (deoxyribonucleotide)n-3'-hydroxyl + 5'-phospho-(deoxyribonucleotide)m = (deoxyribonucleotide)n+m + AMP + beta-nicotinamide D-nucleotide.. Functionally, DNA ligase that catalyzes the formation of phosphodiester linkages between 5'-phosphoryl and 3'-hydroxyl groups in double-stranded DNA using NAD as a coenzyme and as the energy source for the reaction. It is essential for DNA replication and repair of damaged DNA. This Phenylobacterium zucineum (strain HLK1) protein is DNA ligase.